Here is a 178-residue protein sequence, read N- to C-terminus: Deoxycytidylate deaminase (178 aa).

The CMP/dCMP-type deaminase domain occupies 14-145 (EWPEYFMAVA…EETTAARLLF (132 aa)). H84 provides a ligand contact to Zn(2+). The active-site Proton donor is E86. Residues C110 and C113 each coordinate Zn(2+). S174 is modified (phosphoserine).

This sequence belongs to the cytidine and deoxycytidylate deaminase family. As to quaternary structure, homohexamer. It depends on Zn(2+) as a cofactor.

It catalyses the reaction dCMP + H2O + H(+) = dUMP + NH4(+). The enzyme catalyses 5-hydroxymethyl-dCMP + H2O + H(+) = 5-hydroxymethyl-dUMP + NH4(+). Its activity is regulated as follows. Allosteric enzyme whose activity is greatly influenced by the end products of its metabolic pathway, dCTP and dTTP. Its function is as follows. Catalyzes the deamination of dCMP to dUMP, providing the nucleoside monophosphate substrate for the thymidylate synthase/TYMS. Also, part of a nucleotide salvage pathway that eliminates epigenetically modified 5-hydroxymethyl-dCMP (hmdCMP) in a two-step process entailing deamination to cytotoxic 5-hydroxymethyl-dUMP (hmdUMP), followed by its hydrolysis into 5-hydroxymethyluracil (hmU) and 2-deoxy-D-ribose 5-phosphate (deoxyribosephosphate). Catalyzes the first step in that pathway, the deamination of 5-hydroxymethyl-dCMP (hmdCMP). In Mus musculus (Mouse), this protein is Deoxycytidylate deaminase.